The chain runs to 89 residues: Large ribosomal subunit protein bL27 (89 aa).

The tract at residues 1 to 26 (MATKKAGGSSKNGRDSAGRRLGLKKT) is disordered.

Belongs to the bacterial ribosomal protein bL27 family.

The sequence is that of Large ribosomal subunit protein bL27 from Orientia tsutsugamushi (strain Boryong) (Rickettsia tsutsugamushi).